The sequence spans 680 residues: Probable Xaa-Pro aminopeptidase P (680 aa).

Mn(2+)-binding residues include Asp-477, Asp-488, Glu-586, and Glu-600.

The protein belongs to the peptidase M24B family. It depends on Mn(2+) as a cofactor.

It catalyses the reaction Release of any N-terminal amino acid, including proline, that is linked to proline, even from a dipeptide or tripeptide.. In terms of biological role, catalyzes the removal of a penultimate prolyl residue from the N-termini of peptides. The chain is Probable Xaa-Pro aminopeptidase P (AMPP) from Podospora anserina (strain S / ATCC MYA-4624 / DSM 980 / FGSC 10383) (Pleurage anserina).